A 246-amino-acid chain; its full sequence is Small ribosomal subunit protein uS2 (246 aa).

It belongs to the universal ribosomal protein uS2 family.

The sequence is that of Small ribosomal subunit protein uS2 from Exiguobacterium sp. (strain ATCC BAA-1283 / AT1b).